A 267-amino-acid chain; its full sequence is Undecaprenyl-diphosphatase (267 aa).

The next 8 helical transmembrane spans lie at 1 to 21 (MTLF…FLPV), 40 to 60 (GLAI…LYFW), 83 to 103 (AFLA…GLII), 111 to 131 (MMRS…VLYW), 144 to 164 (GWTL…LIPG), 189 to 209 (AMLM…ADVI), 219 to 239 (DGAL…ALMM), and 245 to 265 (VSFT…LVYA).

This sequence belongs to the UppP family.

The protein localises to the cell inner membrane. It carries out the reaction di-trans,octa-cis-undecaprenyl diphosphate + H2O = di-trans,octa-cis-undecaprenyl phosphate + phosphate + H(+). Catalyzes the dephosphorylation of undecaprenyl diphosphate (UPP). Confers resistance to bacitracin. The protein is Undecaprenyl-diphosphatase of Roseobacter denitrificans (strain ATCC 33942 / OCh 114) (Erythrobacter sp. (strain OCh 114)).